The chain runs to 70 residues: Movement protein TGBp3 (70 aa).

Residues 1-4 (MEAG) are Lumenal-facing. The chain crosses the membrane as a helical span at residues 5–27 (AYLNAIIFVLVATIIAVISRGLT). Over 28 to 70 (RTEPCTIRITGESITVHACHIDSETIKALANLKPLSLERLSFQ) the chain is Cytoplasmic.

This sequence belongs to the Tymovirales TGBp3 protein family.

The protein resides in the host endoplasmic reticulum membrane. Functionally, plays a role in viral cell-to-cell propagation, by facilitating genome transport to neighboring plant cells through plasmosdesmata. May induce the formation of granular vesicles derived from the Endoplasmic reticulum, which align on actin filaments. The sequence is that of Movement protein TGBp3 from Potato virus X (strain CP) (PVX).